A 338-amino-acid polypeptide reads, in one-letter code: Glycerol-3-phosphate dehydrogenase [NAD(P)+] (338 aa).

Positions 11, 12, 32, 33, and 109 each coordinate NADPH. Residues Lys-109, Gly-140, and Ser-142 each contribute to the sn-glycerol 3-phosphate site. An NADPH-binding site is contributed by Ala-144. Sn-glycerol 3-phosphate is bound by residues Lys-195, Asp-248, Ser-258, Arg-259, and Asn-260. The active-site Proton acceptor is the Lys-195. Arg-259 lines the NADPH pocket. The NADPH site is built by Val-283 and Glu-285.

The protein belongs to the NAD-dependent glycerol-3-phosphate dehydrogenase family.

The protein localises to the cytoplasm. The catalysed reaction is sn-glycerol 3-phosphate + NAD(+) = dihydroxyacetone phosphate + NADH + H(+). The enzyme catalyses sn-glycerol 3-phosphate + NADP(+) = dihydroxyacetone phosphate + NADPH + H(+). Its pathway is membrane lipid metabolism; glycerophospholipid metabolism. Catalyzes the reduction of the glycolytic intermediate dihydroxyacetone phosphate (DHAP) to sn-glycerol 3-phosphate (G3P), the key precursor for phospholipid synthesis. This Leuconostoc citreum (strain KM20) protein is Glycerol-3-phosphate dehydrogenase [NAD(P)+].